We begin with the raw amino-acid sequence, 484 residues long: Allantoinase, mitochondrial (484 aa).

Positions 76, 78, 163, 199, 251, and 324 each coordinate Zn(2+). The residue at position 163 (lysine 163) is an N6-carboxylysine.

The protein belongs to the metallo-dependent hydrolases superfamily. Allantoinase family. Homotetramer. Zn(2+) is required as a cofactor. Post-translationally, carboxylation allows a single lysine to coordinate two zinc ions. Liver and kidney.

The protein resides in the mitochondrion. The enzyme catalyses (S)-allantoin + H2O = allantoate + H(+). It functions in the pathway nitrogen metabolism; (S)-allantoin degradation; allantoate from (S)-allantoin: step 1/1. This Aquarana catesbeiana (American bullfrog) protein is Allantoinase, mitochondrial (ALN).